A 102-amino-acid polypeptide reads, in one-letter code: Small ribosomal subunit protein uS10 (102 aa).

The protein belongs to the universal ribosomal protein uS10 family. In terms of assembly, part of the 30S ribosomal subunit.

Functionally, involved in the binding of tRNA to the ribosomes. The protein is Small ribosomal subunit protein uS10 of Leptospira biflexa serovar Patoc (strain Patoc 1 / Ames).